The chain runs to 149 residues: Nucleoside diphosphate kinase (149 aa).

ATP contacts are provided by Lys9, Phe57, Arg85, Thr91, Arg102, and Asn112. The active-site Pros-phosphohistidine intermediate is the His115.

Belongs to the NDK family. As to quaternary structure, homotetramer. It depends on Mg(2+) as a cofactor.

The protein localises to the cytoplasm. The enzyme catalyses a 2'-deoxyribonucleoside 5'-diphosphate + ATP = a 2'-deoxyribonucleoside 5'-triphosphate + ADP. It catalyses the reaction a ribonucleoside 5'-diphosphate + ATP = a ribonucleoside 5'-triphosphate + ADP. Major role in the synthesis of nucleoside triphosphates other than ATP. The ATP gamma phosphate is transferred to the NDP beta phosphate via a ping-pong mechanism, using a phosphorylated active-site intermediate. The chain is Nucleoside diphosphate kinase from Staphylococcus epidermidis (strain ATCC 35984 / DSM 28319 / BCRC 17069 / CCUG 31568 / BM 3577 / RP62A).